The following is a 516-amino-acid chain: Rho guanine nucleotide exchange factor 9 (516 aa).

The 60-residue stretch at aspartate 8–asparagine 67 folds into the SH3 domain. Residues arginine 100–glutamate 110 are interaction with GPHN. The DH domain maps to methionine 103 to arginine 287. A PH domain is found at glutamate 318–lysine 425. The segment at arginine 450 to tyrosine 480 is disordered. Serine 502 bears the Phosphoserine mark.

As to quaternary structure, interacts with GPHN. In terms of tissue distribution, detected in embryonic and adult brain.

It localises to the cytoplasm. It is found in the postsynaptic density. Functionally, acts as a guanine nucleotide exchange factor (GEF) for CDC42. Promotes formation of GPHN clusters. This is Rho guanine nucleotide exchange factor 9 (Arhgef9) from Mus musculus (Mouse).